The following is a 427-amino-acid chain: Adenylosuccinate synthetase (427 aa).

GTP-binding positions include 11–17 and 39–41; these read GDEGKGK and GHT. Residue Asp12 is the Proton acceptor of the active site. Asp12 and Gly39 together coordinate Mg(2+). Residues 12–15, 37–40, Thr132, Arg146, Gln223, Thr238, and Arg302 contribute to the IMP site; these read DEGK and NAGH. Catalysis depends on His40, which acts as the Proton donor. 298 to 304 contributes to the substrate binding site; it reads TTTGRPR. Residues Arg304, 330–332, and 412–414 each bind GTP; these read KLD and GVG.

The protein belongs to the adenylosuccinate synthetase family. In terms of assembly, homodimer. Mg(2+) is required as a cofactor.

The protein resides in the cytoplasm. The catalysed reaction is IMP + L-aspartate + GTP = N(6)-(1,2-dicarboxyethyl)-AMP + GDP + phosphate + 2 H(+). It functions in the pathway purine metabolism; AMP biosynthesis via de novo pathway; AMP from IMP: step 1/2. In terms of biological role, plays an important role in the de novo pathway and in the salvage pathway of purine nucleotide biosynthesis. Catalyzes the first committed step in the biosynthesis of AMP from IMP. In Dictyostelium discoideum (Social amoeba), this protein is Adenylosuccinate synthetase (purA).